The chain runs to 487 residues: UPF0276 protein SAV_2218 (487 aa).

Residues 1–285 (MVEEGTMERL…LGAIRKTLEK (285 aa)) form a UPF0276 region. Positions 286 to 487 (AGTRAGASAG…RATRRVLLRR (202 aa)) are unknown. A disordered region spans residues 319–348 (AGPRRGGADAQAAPRAAGTEALSAASTSTP). Low complexity predominate over residues 326–348 (ADAQAAPRAAGTEALSAASTSTP).

In the N-terminal section; belongs to the UPF0276 family.

This is UPF0276 protein SAV_2218 from Streptomyces avermitilis (strain ATCC 31267 / DSM 46492 / JCM 5070 / NBRC 14893 / NCIMB 12804 / NRRL 8165 / MA-4680).